A 739-amino-acid polypeptide reads, in one-letter code: Nucleoprotein (739 aa).

The stretch at 334 to 363 forms a coiled coil; sequence VNVGEQYQQLREAATEAEKQLQQYAESREL. Positions 415–646 are disordered; it reads PKTSGHYDDD…QDSDNTQPEH (232 aa). Low complexity-rich tracts occupy residues 449-458 and 504-514; these read SQDTTIPDVV and KGGQQKNSQKG. Residues 520–530 are compositionally biased toward polar residues; sequence RQTQSRPTQNI. A compositionally biased stretch (acidic residues) spans 567 to 579; the sequence is EEADPLDDADDET. Basic and acidic residues predominate over residues 611-638; the sequence is YRDHSEKKELPQDERQDQDHTQEARNQD.

It belongs to the filoviruses nucleoprotein family. As to quaternary structure, homooligomer. Homomultimerizes to form the nucleocapsid. Binds to viral genomic RNA. Interacts with VP35 and VP30 to form the nucleocapsid. Interacts with host PPP2R5C; this interaction leads to VP30 dephosphorylation and viral transcription. Interacts with VP24; this interaction facilitates nucleocapsid assembly and genome packaging. Interacts with matrix protein VP40; this interaction allows recruitment of the nucleocapsid into progeny virions. Interacts with host STAU1. Interacts with host NXF1 (via RNA-binding domain); this interaction recruits NXF1 to the inclusion bodies were viral replication takes place, probably to export viral mRNA-NXF1 complexes from these sites. Interacts with host CCDC92; this interaction sequesters NP in the host cytoplasm. Interacts with host TRIM14. Post-translationally, phosphorylated and O-glycosylated by host. Acetylated by host EP300 in vitro.

It localises to the virion. The protein resides in the host cytoplasm. In terms of biological role, oligomerizes into helical capsid to encapsidate the viral genome, protecting it from nucleases and the cellular innate immune response. VP35 binds to and stabilizes monomeric NP, keeping it soluble. Upon virus replication, NP is recruited to bind cooperatively viral genomic RNA and VP35 is released. The encapsidated genomic RNA is termed the nucleocapsid and serves as template for transcription and replication. The nucleocapsid is helical with a pitch of 10.81 NP per turn and a diameter of about 22nm. Each NP binds to six nucleotides of viral genomic RNA, three being exposed to the solvant and three hidden into the nucleocapsid. Also recruits host PPP2R5C phosphatase to dephosphorylate VP30 and thereby promote viral transcription. Upon virion assembly and budding, NP binds to VP24 and possibly host STAU1. The polypeptide is Nucleoprotein (NP) (Zaire ebolavirus (strain Gabon-94) (ZEBOV)).